The chain runs to 287 residues: Shikimate kinase 3, chloroplastic (287 aa).

A chloroplast-targeting transit peptide spans 1-57 (MDAGVGLRAKPGAWAGLGNPRRSSTARVPVRFAVEKFAQPLVLGSDRRSCGAKLKVS). 98–105 (GMMGSGKT) serves as a coordination point for ATP. Residue Thr-105 participates in Mg(2+) binding. Substrate contacts are provided by Asp-123, Arg-148, and Gly-170. Arg-209 contacts ATP.

The protein belongs to the shikimate kinase family. Mg(2+) serves as cofactor. As to expression, expressed in panicles.

The protein localises to the plastid. Its subcellular location is the chloroplast. The enzyme catalyses shikimate + ATP = 3-phosphoshikimate + ADP + H(+). It functions in the pathway metabolic intermediate biosynthesis; chorismate biosynthesis; chorismate from D-erythrose 4-phosphate and phosphoenolpyruvate: step 5/7. In terms of biological role, catalyzes the specific phosphorylation of the 3-hydroxyl group of shikimic acid using ATP as a cosubstrate. This Oryza sativa subsp. japonica (Rice) protein is Shikimate kinase 3, chloroplastic (SK3).